Reading from the N-terminus, the 154-residue chain is Fucose mutarotase (154 aa).

The active-site Proton donor is the His24. Asp32 is a substrate binding site. The active site involves Asp69. Residues Met79, Tyr120, Tyr138, and Asn140 each coordinate substrate. The active site involves Tyr120.

This sequence belongs to the RbsD / FucU family. Mainly homodimer, but also exists as homotetramer, homooctamer, and homodecamer. The homodimeric form seems catalytically inactive.

It catalyses the reaction alpha-L-fucose = beta-L-fucose. The protein operates within carbohydrate metabolism; L-fucose metabolism. Functionally, involved in the interconversion between alpha- and beta-L-fucoses. L-Fucose (6-deoxy-L-galactose) exists as alpha-L-fucose (29.5%) and beta-L-fucose (70.5%), the beta-form is metabolized through the salvage pathway. GDP-L-fucose formed either by the de novo or salvage pathways is transported into the endoplasmic reticulum, where it serves as a substrate for N- and O-glycosylations by fucosyltransferases. Fucosylated structures expressed on cell surfaces or secreted in biological fluids are believed to play a critical role in cell-cell adhesion and recognition processes. This Homo sapiens (Human) protein is Fucose mutarotase (FUOM).